The chain runs to 294 residues: Homeobox-leucine zipper protein ATHB-13 (294 aa).

A DNA-binding region (homeobox) is located at residues 82 to 141 (MGEKKRRLNMEQVKTLEKNFELGNKLEPERKMQLARALGLQPRQIAIWFQNRRARWKTKQ). Residues 142-177 (LEKDYDTLKRQFDTLKAENDLLQTHNQKLQAEIMGL) are leucine-zipper. Positions 181-246 (EQTESINLNK…FFPPSPATAT (66 aa)) are disordered. Low complexity predominate over residues 197-210 (SNRSDNSSDNLRLD). Positions 214-223 (APPSNDSTLT) are enriched in polar residues.

This sequence belongs to the HD-ZIP homeobox family. Class I subfamily. Predominantly expressed in leaves and flowers.

It is found in the nucleus. Its function is as follows. Probable transcription factor that may act in the sucrose-signaling pathway. This is Homeobox-leucine zipper protein ATHB-13 (ATHB-13) from Arabidopsis thaliana (Mouse-ear cress).